The sequence spans 354 residues: Holliday junction branch migration complex subunit RuvB (354 aa).

The interval 1–183 (MTGDNLVSAY…FGFVAHLDFY (183 aa)) is large ATPase domain (RuvB-L). Residues arginine 23, glycine 64, lysine 67, threonine 68, serine 69, 130-132 (EDF), arginine 173, tyrosine 183, and arginine 220 contribute to the ATP site. Threonine 68 contacts Mg(2+). A small ATPAse domain (RuvB-S) region spans residues 184–254 (SPADLETLLH…AARAALLVYD (71 aa)). The segment at 257 to 354 (ALGLDRLDRQ…DLFSVEPDQP (98 aa)) is head domain (RuvB-H). Arginine 312 and arginine 317 together coordinate DNA. A disordered region spans residues 330 to 354 (TPPNGIFGSDAPPASDLFSVEPDQP).

This sequence belongs to the RuvB family. As to quaternary structure, homohexamer. Forms an RuvA(8)-RuvB(12)-Holliday junction (HJ) complex. HJ DNA is sandwiched between 2 RuvA tetramers; dsDNA enters through RuvA and exits via RuvB. An RuvB hexamer assembles on each DNA strand where it exits the tetramer. Each RuvB hexamer is contacted by two RuvA subunits (via domain III) on 2 adjacent RuvB subunits; this complex drives branch migration. In the full resolvosome a probable DNA-RuvA(4)-RuvB(12)-RuvC(2) complex forms which resolves the HJ.

Its subcellular location is the cytoplasm. The enzyme catalyses ATP + H2O = ADP + phosphate + H(+). Its function is as follows. The RuvA-RuvB-RuvC complex processes Holliday junction (HJ) DNA during genetic recombination and DNA repair, while the RuvA-RuvB complex plays an important role in the rescue of blocked DNA replication forks via replication fork reversal (RFR). RuvA specifically binds to HJ cruciform DNA, conferring on it an open structure. The RuvB hexamer acts as an ATP-dependent pump, pulling dsDNA into and through the RuvAB complex. RuvB forms 2 homohexamers on either side of HJ DNA bound by 1 or 2 RuvA tetramers; 4 subunits per hexamer contact DNA at a time. Coordinated motions by a converter formed by DNA-disengaged RuvB subunits stimulates ATP hydrolysis and nucleotide exchange. Immobilization of the converter enables RuvB to convert the ATP-contained energy into a lever motion, pulling 2 nucleotides of DNA out of the RuvA tetramer per ATP hydrolyzed, thus driving DNA branch migration. The RuvB motors rotate together with the DNA substrate, which together with the progressing nucleotide cycle form the mechanistic basis for DNA recombination by continuous HJ branch migration. Branch migration allows RuvC to scan DNA until it finds its consensus sequence, where it cleaves and resolves cruciform DNA. This Salinispora arenicola (strain CNS-205) protein is Holliday junction branch migration complex subunit RuvB.